A 34-amino-acid polypeptide reads, in one-letter code: Photosystem II reaction center protein M (34 aa).

Residues 5 to 25 traverse the membrane as a helical segment; sequence ILAFIATALFILVPTAFLLII.

Belongs to the PsbM family. As to quaternary structure, PSII is composed of 1 copy each of membrane proteins PsbA, PsbB, PsbC, PsbD, PsbE, PsbF, PsbH, PsbI, PsbJ, PsbK, PsbL, PsbM, PsbT, PsbX, PsbY, PsbZ, Psb30/Ycf12, at least 3 peripheral proteins of the oxygen-evolving complex and a large number of cofactors. It forms dimeric complexes.

The protein localises to the plastid. It localises to the chloroplast thylakoid membrane. One of the components of the core complex of photosystem II (PSII). PSII is a light-driven water:plastoquinone oxidoreductase that uses light energy to abstract electrons from H(2)O, generating O(2) and a proton gradient subsequently used for ATP formation. It consists of a core antenna complex that captures photons, and an electron transfer chain that converts photonic excitation into a charge separation. This subunit is found at the monomer-monomer interface. This Coffea arabica (Arabian coffee) protein is Photosystem II reaction center protein M.